A 140-amino-acid polypeptide reads, in one-letter code: Heavy metal-associated isoprenylated plant protein 31 (140 aa).

The region spanning 3-67 (MTVEIRVPNL…AVRRAGKAAE (65 aa)) is the HMA domain. Residues C14 and C17 each contribute to the a metal cation site. The residue at position 137 (C137) is a Cysteine methyl ester. C137 carries the S-farnesyl cysteine lipid modification. A propeptide spans 138–140 (TIM) (removed in mature form).

It belongs to the HIPP family.

In terms of biological role, heavy-metal-binding protein. This Arabidopsis thaliana (Mouse-ear cress) protein is Heavy metal-associated isoprenylated plant protein 31.